The primary structure comprises 342 residues: Protein RecA (342 aa).

An ATP-binding site is contributed by 65-72 (GPESSGKT).

The protein belongs to the RecA family.

The protein localises to the cytoplasm. Its function is as follows. Can catalyze the hydrolysis of ATP in the presence of single-stranded DNA, the ATP-dependent uptake of single-stranded DNA by duplex DNA, and the ATP-dependent hybridization of homologous single-stranded DNAs. It interacts with LexA causing its activation and leading to its autocatalytic cleavage. This Caldanaerobacter subterraneus subsp. tengcongensis (strain DSM 15242 / JCM 11007 / NBRC 100824 / MB4) (Thermoanaerobacter tengcongensis) protein is Protein RecA.